The primary structure comprises 354 residues: MHRNILMVLIANVVLGTLIVLSSHHWFTLWVGLEMNTLSILPILSYQFTPRNVESSVKYFLVQSVSAGIVLNVVIIQAWLYSSWSLMEPLNQATSFLMTLALGLKLGLFPCHYWFPDVIQGVGFIQGLVLSTWQKIAPFAVLVYVVESLNISLLASLGVLSVLVGGWGGLNQTQMRKIFAFSSIAHIGWICSTVGYSVSVACVMLVAYIIINSSVFFMANSFDLKSLSHVGRLSLYNFVGGAGLVLSILSLGGLPPLFGFLIKFISLKCLVENGCFILAGVLVMGSLLSLFFYLRIAFNSSLTLFPQHSLVVFSWRSNRNQTGGFTSEGVLLSVSFGISSLGLVCLPVFISLLN.

Helical transmembrane passes span 5-25 (ILMV…SSHH), 26-46 (WFTL…ILSY), 60-80 (FLVQ…QAWL), 96-116 (FLMT…YWFP), 122-142 (VGFI…FAVL), 149-169 (LNIS…GWGG), 198-218 (VSVA…VFFM), 242-262 (AGLV…GFLI), 274-294 (GCFI…FFYL), and 330-350 (VLLS…PVFI).

Belongs to the complex I subunit 2 family.

It localises to the mitochondrion inner membrane. It catalyses the reaction a ubiquinone + NADH + 5 H(+)(in) = a ubiquinol + NAD(+) + 4 H(+)(out). In terms of biological role, core subunit of the mitochondrial membrane respiratory chain NADH dehydrogenase (Complex I) that is believed to belong to the minimal assembly required for catalysis. Complex I functions in the transfer of electrons from NADH to the respiratory chain. The immediate electron acceptor for the enzyme is believed to be ubiquinone. This is NADH-ubiquinone oxidoreductase chain 2 (ND2) from Patiria pectinifera (Starfish).